The following is a 151-amino-acid chain: uncharacterized protein (151 aa).

Residues 35-147 (GIFENERQKL…RETLQESLED (113 aa)) adopt a coiled-coil conformation.

This is an uncharacterized protein from Helicobacter hepaticus (strain ATCC 51449 / 3B1).